A 342-amino-acid polypeptide reads, in one-letter code: Gibberellin cluster GA4 desaturase (342 aa).

The interval 127-183 (PELAPPYPMPGKSSSGSKEREAIPANELPTTRAKGFQKGEEEGPVRKPHKDWGPSGA) is disordered.

The protein belongs to the asaB hydroxylase/desaturase family.

It functions in the pathway plant hormone biosynthesis; gibberellin biosynthesis. Functionally, GA4 desaturase; part of the gene cluster that mediates the biosynthesis of gibberellins (GAs), diterpenoids that may provide a selective advantage during infection of the preferred host plant, rice. Gibberellins (GAs) are diterpenoids and are synthesized via the mevalonate pathway. Biosynthesis of the major metabolite GA3 (gibberellic acid) from geranylgeranyl diphosphate (GGPP) requires 13 steps. The GGPP produced by the geranylgeranyl diphosphate synthase GGS2 is converted to ent-kaurene via ent-copalyldiphosphate in a two-step cyclization reaction performed by the bifunctional ent-copalyl diphosphate synthase/ent-kaurene synthase enzyme (CPS/KS). Ent-Kaurene is metabolized to GAs by a series of oxidation reactions catalyzed by cytochrome P450 monooxygenases. Cytochrome P450 monooxygenase P450-4 is an ent-kaurene oxidase that catalyzes the three oxidation steps between ent-kaurene and ent-kaurenoic acid. The highly multifunctional cytochrome P450 monooxygenase P450-1 then catalyzes four steps involving oxidation at two carbon atoms, in the main pathway from ent-kaurenoic acid to GA14 via GA12-aldehyde as well as producing kaurenolides and fujenoic acids as by-products. The cytochrome P450 monooxygenase P450-2 then converts GA14 to GA4 by removal of C-20. GA4 is further converted to GA7 by the GA4 desaturase DES via 1,2-desaturation before cytochrome P450 monooxygenase P450-3, a 13-hydroxylase, hydroxylates GA7 to GA3, the final product of the GA-biosynthetic pathway. The protein is Gibberellin cluster GA4 desaturase of Gibberella fujikuroi (strain CBS 195.34 / IMI 58289 / NRRL A-6831) (Bakanae and foot rot disease fungus).